A 294-amino-acid chain; its full sequence is MGKDFKSGGGNAGGKPFNKGPGGPGGRPFNKGPGGPGGPGGKFGGGRPGGPGGKFGAKGPRGPKTIIVKHRLEGVFICKGQQEALVTKNFFPGESVYNEKRMSVEENGEKIEYRVWNPYRSKIAAAVVGGISDIHIKPGSKVLYLGGASGTTVSHVADIVGPTGVVYAVEFSHRSGRDLVNMAKKRTNVVPIIGDARKPQEYRFLVGMVDVVFADVAQPDQARIMGMNCQYFLKNGGHFLISIKACCIDSTNEPAVVFAAEVQKLKEEGLKPEQQLTLEPYERDHAMVLGSYRA.

The tract at residues M1–G62 is disordered. Residues G20 to G56 show a composition bias toward gly residues. Asymmetric dimethylarginine occurs at positions 27, 47, and 61. S-adenosyl-L-methionine contacts are provided by residues T151 to T152, E170 to F171, D195 to A196, and D215 to Q218.

Belongs to the methyltransferase superfamily. Fibrillarin family. As to quaternary structure, component of box C/D small nucleolar ribonucleoprotein (snoRNP) particles. It is associated with the U3, U8 and U13 small nuclear RNAs. Post-translationally, by homology to other fibrillarins, some or all of the N-terminal domain arginines are modified to asymmetric dimethylarginine (DMA).

The protein localises to the nucleus. It is found in the nucleolus. It catalyses the reaction L-glutaminyl-[histone H2A] + S-adenosyl-L-methionine = N(5)-methyl-L-glutaminyl-[histone H2A] + S-adenosyl-L-homocysteine + H(+). Functionally, S-adenosyl-L-methionine-dependent methyltransferase that has the ability to methylate both RNAs and proteins. Involved in pre-rRNA processing. Utilizes the methyl donor S-adenosyl-L-methionine to catalyze the site-specific 2'-hydroxyl methylation of ribose moieties in pre-ribosomal RNA. Site specificity is provided by a guide RNA that base pairs with the substrate. Methylation occurs at a characteristic distance from the sequence involved in base pairing with the guide RNA. Also acts as a protein methyltransferase by mediating methylation of 'Gln-105' of histone H2A (H2AQ105me), a modification that impairs binding of the FACT complex and is specifically present at 35S ribosomal DNA locus. The protein is rRNA 2'-O-methyltransferase fibrillarin (FIB) of Tetrahymena thermophila.